A 432-amino-acid polypeptide reads, in one-letter code: Enolase (432 aa).

Position 167 (Q167) interacts with (2R)-2-phosphoglycerate. E209 acts as the Proton donor in catalysis. Mg(2+) is bound by residues D246, E287, and D314. K339, R368, S369, and K390 together coordinate (2R)-2-phosphoglycerate. K339 functions as the Proton acceptor in the catalytic mechanism.

This sequence belongs to the enolase family. It depends on Mg(2+) as a cofactor.

Its subcellular location is the cytoplasm. It localises to the secreted. The protein localises to the cell surface. It catalyses the reaction (2R)-2-phosphoglycerate = phosphoenolpyruvate + H2O. The protein operates within carbohydrate degradation; glycolysis; pyruvate from D-glyceraldehyde 3-phosphate: step 4/5. Catalyzes the reversible conversion of 2-phosphoglycerate (2-PG) into phosphoenolpyruvate (PEP). It is essential for the degradation of carbohydrates via glycolysis. The protein is Enolase of Prochlorococcus marinus (strain MIT 9211).